The sequence spans 153 residues: Calmodulin-like protein 4 (153 aa).

EF-hand domains follow at residues 8–43 (DAIQ…LGTC), 44–79 (PTPG…QQKQ), 81–116 (DPEN…MGEK), and 117–152 (LTPE…PVPD).

It belongs to the calmodulin family. Associates with the IMAC/intermicrovillar adhesion complex.

It is found in the cell projection. The protein resides in the microvillus. Functionally, as part of the intermicrovillar adhesion complex/IMAC plays a role in epithelial brush border differentiation, controlling microvilli organization and length. Acts as a light chain for MYO7B and is required for efficient targeting of the IMAC to the tips of border brush microvilli. This Xenopus tropicalis (Western clawed frog) protein is Calmodulin-like protein 4 (calml4).